A 440-amino-acid polypeptide reads, in one-letter code: 5-methylthioadenosine/S-adenosylhomocysteine deaminase (440 aa).

Zn(2+) is bound by residues histidine 70 and histidine 72. Residues glutamate 99 and histidine 191 each coordinate substrate. Histidine 218 contacts Zn(2+). 2 residues coordinate substrate: glutamate 221 and aspartate 306. Aspartate 306 serves as a coordination point for Zn(2+).

It belongs to the metallo-dependent hydrolases superfamily. MTA/SAH deaminase family. Zn(2+) is required as a cofactor.

The enzyme catalyses S-adenosyl-L-homocysteine + H2O + H(+) = S-inosyl-L-homocysteine + NH4(+). The catalysed reaction is S-methyl-5'-thioadenosine + H2O + H(+) = S-methyl-5'-thioinosine + NH4(+). Catalyzes the deamination of 5-methylthioadenosine and S-adenosyl-L-homocysteine into 5-methylthioinosine and S-inosyl-L-homocysteine, respectively. Is also able to deaminate adenosine. The polypeptide is 5-methylthioadenosine/S-adenosylhomocysteine deaminase (Nitratidesulfovibrio vulgaris (strain DSM 19637 / Miyazaki F) (Desulfovibrio vulgaris)).